The primary structure comprises 71 residues: Brevinin-1HN1 (71 aa).

The N-terminal stretch at M1–C22 is a signal peptide. Positions E23 to E45 are excised as a propeptide. An intrachain disulfide couples C65 to C71.

Expressed by the skin glands.

The protein localises to the secreted. Has antimicrobial activity against Gram-positive bacteria and fungi but has weak or no activity against a range of Gram-negative bacteria except P.faecalis. Active against the Gram-positive bacteria E.faecium 091299 (MIC=19 uM), E.faecalis 981 (MIC=19 uM), S.aureus ATCC 25923 (MIC=1.2 uM), S.carnosus KHS (MIC=4.8 uM), B.licheniformis X39 (MIC=2.4 uM) and R.rhodochrous X15 (MIC=1.2 uM). Active against the Gram-negative bacterium P.faecalis X29 (MIC=4.8 uM), is virtually inactive against E.coli ATCC 25922 (MIC=150 uM) and inactive against P.aeruginosa and S.typhi. Has antifungal activity against C.albicans ATCC 2002 (MIC=2.4 uM) and is also active against the slime mold 090223 (MIC=1.2 uM). Has low hemolytic activity against human erythrocytes (LC(50)=75 uM). This is Brevinin-1HN1 from Odorrana hainanensis (Odor frog).